A 399-amino-acid polypeptide reads, in one-letter code: Calsequestrin-2 (399 aa).

The signal sequence occupies residues 1–19 (MKRTHLFIVGIYFLSSCRA). A Phosphotyrosine modification is found at Y282. N-linked (GlcNAc...) asparagine glycosylation is present at N335. A disordered region spans residues 365–399 (VLSGKINTEDDDEDDDDDDNSDEEDNDDSDDDDDE). The segment covering 373–399 (EDDDEDDDDDDNSDEEDNDDSDDDDDE) has biased composition (acidic residues). Phosphoserine occurs at positions 385 and 393.

Belongs to the calsequestrin family. As to quaternary structure, monomer, homodimer and homooligomer. Mostly monomeric in the absence of calcium. Forms higher oligomers in a calcium-dependent manner. Dimers associate to form tetramers, that then form linear homomer chains. Interacts with ASPH and TRDN. Post-translationally, phosphorylation in the C-terminus, probably by CK2, moderately increases calcium buffering capacity. N-glycosylated.

Its subcellular location is the sarcoplasmic reticulum lumen. Calsequestrin is a high-capacity, moderate affinity, calcium-binding protein and thus acts as an internal calcium store in muscle. Calcium ions are bound by clusters of acidic residues at the protein surface, especially at the interface between subunits. Can bind around 60 Ca(2+) ions. Regulates the release of lumenal Ca(2+) via the calcium release channel RYR2; this plays an important role in triggering muscle contraction. Plays a role in excitation-contraction coupling in the heart and in regulating the rate of heart beats. This chain is Calsequestrin-2 (CASQ2), found in Homo sapiens (Human).